We begin with the raw amino-acid sequence, 366 residues long: Spermine synthase (366 aa).

Position 2 is an N-acetylalanine (Ala-2). Position 57 is a phosphoserine (Ser-57). Positions 122–362 constitute a PABS domain; the sequence is RYWPTADGRL…ELWVFYTVWK (241 aa). Gln-148 serves as a coordination point for S-adenosyl 3-(methylsulfanyl)propylamine. Tyr-177 and Asp-201 together coordinate spermidine. Residues Glu-220 and 255-256 each bind S-adenosyl 3-(methylsulfanyl)propylamine; that span reads DC. Asp-276 functions as the Proton acceptor in the catalytic mechanism. 2 residues coordinate spermidine: Tyr-351 and Glu-353.

The protein belongs to the spermidine/spermine synthase family. As to quaternary structure, homodimer. Dimerization is mediated through the N-terminal domain and seems to be required for activity as deletion of the N-terminal domain causes complete loss of activity.

It carries out the reaction S-adenosyl 3-(methylsulfanyl)propylamine + spermidine = spermine + S-methyl-5'-thioadenosine + H(+). Its pathway is amine and polyamine biosynthesis; spermine biosynthesis; spermine from spermidine: step 1/1. Catalyzes the production of spermine from spermidine and decarboxylated S-adenosylmethionine (dcSAM). Required for normal viability, growth and fertility. The protein is Spermine synthase (Sms) of Mus musculus (Mouse).